The chain runs to 1003 residues: Translation initiation factor IF-2 (1003 aa).

5 stretches are compositionally biased toward basic and acidic residues: residues 61–74 (EKFS…DRNK), 139–169 (PVVE…KKPE), 180–206 (LEEK…KETP), 219–229 (VFKIRPTEFKS), and 252–290 (SKEE…DKIS). Disordered regions lie at residues 61-81 (EKFS…SIEG) and 135-362 (PKAE…KDRF). Over residues 315-350 (NAAGTTNAGGASNNNQRNDNANRPNRNNNSKPNGNN) the composition is skewed to low complexity. A tr-type G domain is found at 502–672 (PRAPIVTVMG…LLEAEMLDLK (171 aa)). The G1 stretch occupies residues 511 to 518 (GHVDHGKT). Residue 511 to 518 (GHVDHGKT) participates in GTP binding. Residues 536–540 (GITQH) are G2. The G3 stretch occupies residues 558-561 (DTPG). Residues 558 to 562 (DTPGH) and 612 to 615 (NKVD) contribute to the GTP site. Residues 612-615 (NKVD) form a G4 region. The interval 648–650 (SAK) is G5.

The protein belongs to the TRAFAC class translation factor GTPase superfamily. Classic translation factor GTPase family. IF-2 subfamily.

The protein localises to the cytoplasm. Functionally, one of the essential components for the initiation of protein synthesis. Protects formylmethionyl-tRNA from spontaneous hydrolysis and promotes its binding to the 30S ribosomal subunits. Also involved in the hydrolysis of GTP during the formation of the 70S ribosomal complex. The protein is Translation initiation factor IF-2 of Phocaeicola vulgatus (strain ATCC 8482 / DSM 1447 / JCM 5826 / CCUG 4940 / NBRC 14291 / NCTC 11154) (Bacteroides vulgatus).